A 336-amino-acid chain; its full sequence is DNA-directed RNA polymerase subunit alpha (336 aa).

Positions 1–226 are alpha N-terminal domain (alpha-NTD); that stretch reads MLIAQRPTLS…ELFGLARELN (226 aa). The tract at residues 243–336 is alpha C-terminal domain (alpha-CTD); sequence LAADMALPIE…SDDAFGDDEL (94 aa).

This sequence belongs to the RNA polymerase alpha chain family. In terms of assembly, homodimer. The RNAP catalytic core consists of 2 alpha, 1 beta, 1 beta' and 1 omega subunit. When a sigma factor is associated with the core the holoenzyme is formed, which can initiate transcription.

It carries out the reaction RNA(n) + a ribonucleoside 5'-triphosphate = RNA(n+1) + diphosphate. Its function is as follows. DNA-dependent RNA polymerase catalyzes the transcription of DNA into RNA using the four ribonucleoside triphosphates as substrates. This is DNA-directed RNA polymerase subunit alpha from Renibacterium salmoninarum (strain ATCC 33209 / DSM 20767 / JCM 11484 / NBRC 15589 / NCIMB 2235).